A 601-amino-acid chain; its full sequence is DNA ligase (601 aa).

Asp-258 provides a ligand contact to ATP. The N6-AMP-lysine intermediate role is filled by Lys-260. 6 residues coordinate ATP: Arg-265, Arg-280, Glu-310, Phe-350, Arg-427, and Lys-433.

This sequence belongs to the ATP-dependent DNA ligase family. In terms of assembly, interacts with the PCNA heterotrimer, probably via subunit PCNA3. A divalent metal cation serves as cofactor.

The enzyme catalyses ATP + (deoxyribonucleotide)n-3'-hydroxyl + 5'-phospho-(deoxyribonucleotide)m = (deoxyribonucleotide)n+m + AMP + diphosphate.. With respect to regulation, ligase activity stimulated by PCNA heterotrimer. In terms of biological role, DNA ligase that seals nicks in double-stranded DNA during DNA replication, DNA recombination and DNA repair. Interaction with PCNA enhances ligase activity. DNA polymerase I, DNA ligase and the flap endonuclease may be constitutively associated with the PCNA heterotrimer forming a scanning complex able to couple DNA synthesis and Okazaki fragment maturation. In Saccharolobus solfataricus (strain ATCC 35092 / DSM 1617 / JCM 11322 / P2) (Sulfolobus solfataricus), this protein is DNA ligase.